Reading from the N-terminus, the 261-residue chain is Neurexophilin-2 (261 aa).

The N-terminal stretch at 1–22 (MSLRPLPLLVVPGLLQLLFCDS) is a signal peptide. The interval 23–87 (EEVIHNTESV…WDWLANITEI (65 aa)) is II. N-linked (GlcNAc...) asparagine glycosylation is found at Asn83, Asn136, Asn146, and Asn152. An III region spans residues 88–166 (QEQLARTKRR…LVPPSKVVEF (79 aa)). The segment at 167–175 (EISPQSTLE) is IV (linker domain). The segment at 176–261 (TKESKSFNCH…HSETPYLSFG (86 aa)) is v (Cys-rich).

Belongs to the neurexophilin family. May be proteolytically processed at the boundary between the N-terminal non-conserved and the central conserved domain in neuron-like cells.

The protein localises to the secreted. In terms of biological role, may be signaling molecules that resemble neuropeptides and that act by binding to alpha-neurexins and possibly other receptors. This chain is Neurexophilin-2 (Nxph2), found in Mus musculus (Mouse).